Consider the following 190-residue polypeptide: Peptidyl-tRNA hydrolase (190 aa).

Tyr14 is a binding site for tRNA. The active-site Proton acceptor is His19. TRNA is bound by residues Tyr64, Asn66, and Asn112.

Belongs to the PTH family. Monomer.

It is found in the cytoplasm. It catalyses the reaction an N-acyl-L-alpha-aminoacyl-tRNA + H2O = an N-acyl-L-amino acid + a tRNA + H(+). Its function is as follows. Hydrolyzes ribosome-free peptidyl-tRNAs (with 1 or more amino acids incorporated), which drop off the ribosome during protein synthesis, or as a result of ribosome stalling. Functionally, catalyzes the release of premature peptidyl moieties from peptidyl-tRNA molecules trapped in stalled 50S ribosomal subunits, and thus maintains levels of free tRNAs and 50S ribosomes. The sequence is that of Peptidyl-tRNA hydrolase from Chlorobaculum parvum (strain DSM 263 / NCIMB 8327) (Chlorobium vibrioforme subsp. thiosulfatophilum).